A 334-amino-acid chain; its full sequence is Glucan endo-1,3-beta-glucosidase GII (334 aa).

The N-terminal stretch at 1–28 (MARKDVASMFAAALFIGAFAAVPTSVQS) is a signal peptide. Residue glutamate 122 is the Proton donor of the active site. Glutamate 259 serves as the catalytic Nucleophile.

Belongs to the glycosyl hydrolase 17 family.

It catalyses the reaction Hydrolysis of (1-&gt;3)-beta-D-glucosidic linkages in (1-&gt;3)-beta-D-glucans.. Its function is as follows. May provide a degree of protection against microbial invasion of germinated barley grain through its ability to degrade fungal cell wall polysaccharides. Hydrolyzes laminarin in vitro. This Hordeum vulgare (Barley) protein is Glucan endo-1,3-beta-glucosidase GII.